A 214-amino-acid chain; its full sequence is Cytochrome c biogenesis ATP-binding export protein CcmA (214 aa).

The region spanning 12 to 214 is the ABC transporter domain; the sequence is LAAHDLAFSR…TRMLTLEVAA (203 aa). Position 44–51 (44–51) interacts with ATP; sequence GDNGAGKT.

It belongs to the ABC transporter superfamily. CcmA exporter (TC 3.A.1.107) family. As to quaternary structure, the complex is composed of two ATP-binding proteins (CcmA) and two transmembrane proteins (CcmB).

The protein resides in the cell inner membrane. It carries out the reaction heme b(in) + ATP + H2O = heme b(out) + ADP + phosphate + H(+). Functionally, part of the ABC transporter complex CcmAB involved in the biogenesis of c-type cytochromes; once thought to export heme, this seems not to be the case, but its exact role is uncertain. Responsible for energy coupling to the transport system. This Xanthomonas axonopodis pv. citri (strain 306) protein is Cytochrome c biogenesis ATP-binding export protein CcmA.